The chain runs to 499 residues: Increased recombination centers protein 15 (499 aa).

47-56 (DQRASLGGAY) contacts FAD.

The protein belongs to the class-I pyridine nucleotide-disulfide oxidoreductase family.

The protein resides in the cytoplasm. The sequence is that of Increased recombination centers protein 15 (IRC15) from Saccharomyces cerevisiae (strain ATCC 204508 / S288c) (Baker's yeast).